The primary structure comprises 255 residues: 4-hydroxy-tetrahydrodipicolinate reductase (255 aa).

Residues 9-14 (GYRGKM), 89-91 (GTT), and 115-118 (APNF) contribute to the NAD(+) site. Histidine 145 (proton donor/acceptor) is an active-site residue. Histidine 146 provides a ligand contact to (S)-2,3,4,5-tetrahydrodipicolinate. The active-site Proton donor is lysine 149. 155–156 (GT) is a binding site for (S)-2,3,4,5-tetrahydrodipicolinate.

This sequence belongs to the DapB family.

It localises to the cytoplasm. It catalyses the reaction (S)-2,3,4,5-tetrahydrodipicolinate + NAD(+) + H2O = (2S,4S)-4-hydroxy-2,3,4,5-tetrahydrodipicolinate + NADH + H(+). The catalysed reaction is (S)-2,3,4,5-tetrahydrodipicolinate + NADP(+) + H2O = (2S,4S)-4-hydroxy-2,3,4,5-tetrahydrodipicolinate + NADPH + H(+). The protein operates within amino-acid biosynthesis; L-lysine biosynthesis via DAP pathway; (S)-tetrahydrodipicolinate from L-aspartate: step 4/4. Its function is as follows. Catalyzes the conversion of 4-hydroxy-tetrahydrodipicolinate (HTPA) to tetrahydrodipicolinate. The polypeptide is 4-hydroxy-tetrahydrodipicolinate reductase (Streptococcus uberis (strain ATCC BAA-854 / 0140J)).